We begin with the raw amino-acid sequence, 370 residues long: Histidinol-phosphate aminotransferase (370 aa).

Lys-231 is subject to N6-(pyridoxal phosphate)lysine.

Belongs to the class-II pyridoxal-phosphate-dependent aminotransferase family. Histidinol-phosphate aminotransferase subfamily. In terms of assembly, homodimer. Pyridoxal 5'-phosphate serves as cofactor.

The enzyme catalyses L-histidinol phosphate + 2-oxoglutarate = 3-(imidazol-4-yl)-2-oxopropyl phosphate + L-glutamate. It participates in amino-acid biosynthesis; L-histidine biosynthesis; L-histidine from 5-phospho-alpha-D-ribose 1-diphosphate: step 7/9. The sequence is that of Histidinol-phosphate aminotransferase from Paracidovorax citrulli (strain AAC00-1) (Acidovorax citrulli).